Consider the following 244-residue polypeptide: Biosynthetic peptidoglycan transglycosylase (244 aa).

Residues 25–45 traverse the membrane as a helical segment; that stretch reads LLLLLTAALLYQSWFLLHIVY.

It belongs to the glycosyltransferase 51 family.

It is found in the cell inner membrane. It carries out the reaction [GlcNAc-(1-&gt;4)-Mur2Ac(oyl-L-Ala-gamma-D-Glu-L-Lys-D-Ala-D-Ala)](n)-di-trans,octa-cis-undecaprenyl diphosphate + beta-D-GlcNAc-(1-&gt;4)-Mur2Ac(oyl-L-Ala-gamma-D-Glu-L-Lys-D-Ala-D-Ala)-di-trans,octa-cis-undecaprenyl diphosphate = [GlcNAc-(1-&gt;4)-Mur2Ac(oyl-L-Ala-gamma-D-Glu-L-Lys-D-Ala-D-Ala)](n+1)-di-trans,octa-cis-undecaprenyl diphosphate + di-trans,octa-cis-undecaprenyl diphosphate + H(+). It functions in the pathway cell wall biogenesis; peptidoglycan biosynthesis. Peptidoglycan polymerase that catalyzes glycan chain elongation from lipid-linked precursors. In Nitrosomonas europaea (strain ATCC 19718 / CIP 103999 / KCTC 2705 / NBRC 14298), this protein is Biosynthetic peptidoglycan transglycosylase.